A 401-amino-acid polypeptide reads, in one-letter code: F-box protein At1g69090 (401 aa).

Residues 1–23 (MASPTLALAQSPPPKSPAVSVSQ) form a disordered region. Residues 27 to 74 (HCWSKLPLDLMQLVFERLAFLDFERAKSVCSSWQFGSKQSKPNNQIPW) enclose the F-box domain.

The protein is F-box protein At1g69090 of Arabidopsis thaliana (Mouse-ear cress).